Reading from the N-terminus, the 81-residue chain is Sulfur carrier protein TusA (81 aa).

The Cysteine persulfide intermediate role is filled by C19.

The protein belongs to the sulfur carrier protein TusA family.

The protein resides in the cytoplasm. Sulfur carrier protein which probably makes part of a sulfur-relay system. In Shewanella sp. (strain ANA-3), this protein is Sulfur carrier protein TusA.